We begin with the raw amino-acid sequence, 172 residues long: Cystatin-like cysteine protease inhibitor EPIC4 (172 aa).

The signal sequence occupies residues 1–17 (MRASLSILVAFPALAAA). The Secondary area of contact motif lies at 71–75 (QVVAG). The tract at residues 129 to 172 (EAATASSSSTPAPTPASTSTSASSSEETMLQSSVQQRAMFSDFV) is disordered. Residues 130 to 156 (AATASSSSTPAPTPASTSTSASSSEET) show a composition bias toward low complexity. Residues 157 to 166 (MLQSSVQQRA) show a composition bias toward polar residues.

The protein belongs to the cystatin family.

Its subcellular location is the secreted. In terms of biological role, secreted effector that interacts with and inhibits host apoplastic pathogenesis-related papain-like cysteine proteases. Inhibition of host proteases by a pathogen extracellular protease inhibitor forms a specific type of defense-counterdefense mechanism between plants and microbial pathogens. This is Cystatin-like cysteine protease inhibitor EPIC4 from Phytophthora infestans (Potato late blight agent).